The primary structure comprises 271 residues: Acetyl-coenzyme A carboxylase carboxyl transferase subunit alpha (271 aa).

One can recognise a CoA carboxyltransferase C-terminal domain in the interval 1–247; the sequence is MSRELIRTAD…KKTILEALGE (247 aa).

The protein belongs to the AccA family. As to quaternary structure, acetyl-CoA carboxylase is a heterohexamer composed of biotin carboxyl carrier protein (AccB), biotin carboxylase (AccC) and two subunits each of ACCase subunit alpha (AccA) and ACCase subunit beta (AccD).

The protein localises to the cytoplasm. It catalyses the reaction N(6)-carboxybiotinyl-L-lysyl-[protein] + acetyl-CoA = N(6)-biotinyl-L-lysyl-[protein] + malonyl-CoA. The protein operates within lipid metabolism; malonyl-CoA biosynthesis; malonyl-CoA from acetyl-CoA: step 1/1. Component of the acetyl coenzyme A carboxylase (ACC) complex. First, biotin carboxylase catalyzes the carboxylation of biotin on its carrier protein (BCCP) and then the CO(2) group is transferred by the carboxyltransferase to acetyl-CoA to form malonyl-CoA. In Clostridium perfringens (strain ATCC 13124 / DSM 756 / JCM 1290 / NCIMB 6125 / NCTC 8237 / Type A), this protein is Acetyl-coenzyme A carboxylase carboxyl transferase subunit alpha.